Here is a 499-residue protein sequence, read N- to C-terminus: Serine/threonine-protein phosphatase 5 (499 aa).

Residues 1–23 (MAMAEGERTECAEPPRDEPPAEG) form a disordered region. N-acetylalanine is present on alanine 2. TPR repeat units lie at residues 28–61 (AEELKTQANDYFKAKDYENAIKFYSQAIELNPSN), 62–95 (AIYYGNRSLAYLRTECYGYALGDATRAIELDKKY), and 96–129 (IKGYYRRAASNMALGKFRAALRDYETVVKVKPND). Residues 200 to 499 (DQKKLHRKCA…ANTLLQLGMM (300 aa)) are catalytic. 3 residues coordinate Mg(2+): aspartate 242, histidine 244, and aspartate 271. Histidine 244 is a binding site for substrate. Residues arginine 275 and 303 to 304 (NH) each bind substrate. Asparagine 303 contacts Mg(2+). Histidine 304 serves as the catalytic Proton donor/acceptor. Position 352 (histidine 352) interacts with Mg(2+). Substrate contacts are provided by arginine 400 and histidine 427. Mg(2+) is bound at residue histidine 427. Residues 495 to 499 (QLGMM) form a required for autoinhibition region.

This sequence belongs to the PPP phosphatase family. PP-5 (PP-T) subfamily. In terms of assembly, probably forms a complex composed of chaperones HSP90 and HSP70, co-chaperones STIP1/HOP, CDC37, PPP5C, PTGES3/p23, TSC1 and client protein TSC2. Probably forms a complex composed of chaperones HSP90 and HSP70, co-chaperones CDC37, PPP5C, TSC1 and client protein TSC2, CDK4, AKT, RAF1 and NR3C1; this complex does not contain co-chaperones STIP1/HOP and PTGES3/p23. Part of a complex with HSP90/HSP90AA1 and steroid receptors. Interacts (via TPR repeats) with HSP90AA1 (via TPR repeat-binding motif) or HSPA1A/HSPA1B; the interaction is direct and activates the phosphatase activity. Dissociates from HSPA1A/HSPA1B and HSP90AA1 in response to arachidonic acid. Interacts with CPNE1 (via VWFA domain). Interacts with CDC16, CDC27. Interacts with KLHDC10 (via the 6 Kelch repeats); inhibits the phosphatase activity on MAP3K5. Interacts with ATM and ATR; both interactions are induced by DNA damage and enhance ATM and ATR kinase activity. Interacts with RAD17; reduced by DNA damage. Interacts with nuclear receptors such as NR3C1/GCR and PPARG (activated by agonist); regulates their transactivation activities. Interacts (via TPR repeats) with S100 proteins S100A1, S100A2, S100A6, S100B and S100P; the interactions are calcium-dependent, strongly activate PPP5C phosphatase activity and compete with HSP90AA1 and MAP3K5 interactions. Interacts with SMAD2 and SMAD3 but not with SMAD1; decreases SMAD3 phosphorylation and protein levels. Interacts (via TPR repeats) with CRY1 and CRY2; the interaction with CRY2 down-regulates the phosphatase activity on CSNK1E. Interacts (via TPR repeats) with the active form of RAC1, GNA12 or GNA13; these interactions activate the phosphatase activity and translocate PPP5C to the cell membrane. Interacts with FLCN. Mg(2+) is required as a cofactor. The cofactor is Mn(2+). Activated by at least two different proteolytic cleavages producing a 56 kDa and a 50 kDa form. As to expression, predominantly found in brain and, in lower levels, in testis, but was nearly undetectable in spleen, lung, skeletal muscle, kidney and liver.

The protein resides in the nucleus. The protein localises to the cytoplasm. Its subcellular location is the cell membrane. The enzyme catalyses O-phospho-L-seryl-[protein] + H2O = L-seryl-[protein] + phosphate. It carries out the reaction O-phospho-L-threonyl-[protein] + H2O = L-threonyl-[protein] + phosphate. Autoinhibited. In the autoinhibited state, the TPR domain interacts with the catalytic region and prevents substrate access to the catalytic pocket. Allosterically activated by various polyunsaturated fatty acids, free long-chain fatty-acids and long-chain fatty acyl-CoA esters, arachidonic acid being the most effective activator. HSP90A and probably RAC1, GNA12 and GNA13 can also release the autoinhibition by the TPR repeat. Activation by RAC1, GNA12 and GNA13 is synergistic with the one produced by fatty acids binding. Inhibited by okadaic acid. Functionally, serine/threonine-protein phosphatase that dephosphorylates a myriad of proteins involved in different signaling pathways including the kinases CSNK1E, ASK1/MAP3K5, PRKDC and RAF1, the nuclear receptors NR3C1, PPARG, ESR1 and ESR2, SMAD proteins and TAU/MAPT. Implicated in wide ranging cellular processes, including apoptosis, differentiation, DNA damage response, cell survival, regulation of ion channels or circadian rhythms, in response to steroid and thyroid hormones, calcium, fatty acids, TGF-beta as well as oxidative and genotoxic stresses. Participates in the control of DNA damage response mechanisms such as checkpoint activation and DNA damage repair through, for instance, the regulation ATM/ATR-signaling and dephosphorylation of PRKDC and TP53BP1. Inhibits ASK1/MAP3K5-mediated apoptosis induced by oxidative stress. Plays a positive role in adipogenesis, mainly through the dephosphorylation and activation of PPARG transactivation function. Also dephosphorylates and inhibits the anti-adipogenic effect of NR3C1. Regulates the circadian rhythms, through the dephosphorylation and activation of CSNK1E. May modulate TGF-beta signaling pathway by the regulation of SMAD3 phosphorylation and protein expression levels. Dephosphorylates and may play a role in the regulation of TAU/MAPT. Through their dephosphorylation, may play a role in the regulation of ions channels such as KCNH2. Dephosphorylate FNIP1, disrupting interaction with HSP90AA1/Hsp90. This Rattus norvegicus (Rat) protein is Serine/threonine-protein phosphatase 5 (Ppp5c).